The following is a 293-amino-acid chain: Nucleotide-binding protein Dole_0503 (293 aa).

Residue 11–18 (GLSGSGKS) coordinates ATP. 62 to 65 (DLRE) contacts GTP.

This sequence belongs to the RapZ-like family.

Displays ATPase and GTPase activities. The polypeptide is Nucleotide-binding protein Dole_0503 (Desulfosudis oleivorans (strain DSM 6200 / JCM 39069 / Hxd3) (Desulfococcus oleovorans)).